The chain runs to 266 residues: Protein crossbronx-like (266 aa).

Positions lysine 15 to arginine 178 constitute a UBC core domain. The disordered stretch occupies residues glutamate 216–glutamine 266.

The protein belongs to the ubiquitin-conjugating enzyme family. FTS subfamily.

This Drosophila ananassae (Fruit fly) protein is Protein crossbronx-like.